A 399-amino-acid chain; its full sequence is Elongation factor Tu (399 aa).

The tr-type G domain occupies 10–209 (KPHVNIGTIG…KVDEYIPTPV (200 aa)). A G1 region spans residues 19 to 26 (GHVDHGKT). A GTP-binding site is contributed by 19 to 26 (GHVDHGKT). Mg(2+) is bound at residue T26. The interval 60–64 (GITIA) is G2. The interval 81 to 84 (DCPG) is G3. Residues 81–85 (DCPGH) and 136–139 (NKAD) each bind GTP. The interval 136 to 139 (NKAD) is G4. The G5 stretch occupies residues 174–176 (SAL).

It belongs to the TRAFAC class translation factor GTPase superfamily. Classic translation factor GTPase family. EF-Tu/EF-1A subfamily. Monomer.

The protein resides in the cytoplasm. It catalyses the reaction GTP + H2O = GDP + phosphate + H(+). GTP hydrolase that promotes the GTP-dependent binding of aminoacyl-tRNA to the A-site of ribosomes during protein biosynthesis. The protein is Elongation factor Tu of Campylobacter curvus (strain 525.92).